Here is an 849-residue protein sequence, read N- to C-terminus: MAP7 domain-containing protein 1 (849 aa).

Disordered stretches follow at residues 1-151 (MESG…REER) and 186-210 (EQRL…EKNK). Residues 24-41 (EPRPSPEGDPSPPPPPTP) show a composition bias toward pro residues. Phosphothreonine occurs at positions 49 and 53. 2 positions are modified to phosphoserine: Ser-72 and Ser-95. Thr-99 bears the Phosphothreonine mark. Phosphoserine occurs at positions 115 and 118. At Thr-120 the chain carries Phosphothreonine. Phosphoserine is present on residues Ser-125 and Ser-127. Basic and acidic residues predominate over residues 132 to 151 (QDVKKAGERHKLAKERREER). Residues 167–223 (EKAKALREKQLQERRRRLEEQRLKAEQRRAALEERQRQKLEKNKERYEAAIQRSVKK) are a coiled coil. Residues Ser-256, Ser-275, Ser-315, Ser-368, and Ser-401 each carry the phosphoserine modification. The tract at residues 318-815 (TLPRNGRDQG…GFPAKGTAGD (498 aa)) is disordered. Positions 407–437 (RRLEATPVQKKEKKDKERENEKEKSALARER) are enriched in basic and acidic residues. Ser-444, Ser-448, Ser-454, and Ser-460 each carry phosphoserine. A compositionally biased stretch (polar residues) spans 457–474 (AELSTKSKARPTSPSTTW). Residue Lys-462 forms a Glycyl lysine isopeptide (Lys-Gly) (interchain with G-Cter in SUMO2) linkage. Residues Ser-479 and Ser-496 each carry the phosphoserine modification. Residues 479-497 (SPCPSPGPGHTLPPKPPSP) show a composition bias toward pro residues. Basic and acidic residues predominate over residues 523-539 (PEDKNHSKSRTAEEKEP). A compositionally biased stretch (pro residues) spans 542–556 (PASPAPSPVPSPTPA). Residues Ser-544, Ser-548, and Ser-552 each carry the phosphoserine modification. Thr-554 carries the phosphothreonine modification. Residues 568–582 (PPDTAVPAVPTVPTF) are compositionally biased toward low complexity. A coiled-coil region spans residues 602-724 (TTDREEATRL…QERRKRLEEI (123 aa)). The segment covering 603–743 (TDREEATRLL…AETKKQDGKE (141 aa)) has biased composition (basic and acidic residues).

Belongs to the MAP7 family.

It localises to the cytoplasm. The protein resides in the cytoskeleton. The protein localises to the spindle. It is found in the microtubule organizing center. Its subcellular location is the centrosome. It localises to the midbody. Microtubule-stabilizing protein involved in the control of cell motility and neurite outgrowth. Facilitate microtubule stabilization through the maintenance of acetylated stable microtubules. The protein is MAP7 domain-containing protein 1 (Map7d1) of Rattus norvegicus (Rat).